We begin with the raw amino-acid sequence, 564 residues long: Oxalyl-CoA decarboxylase (564 aa).

Substrate-binding residues include I32 and Y118. Residues R158 and K220 each contribute to the ADP site. A substrate-binding site is contributed by 261-265; that stretch reads AAARS. Residues R280, D302, and I322 each coordinate ADP. N355 provides a ligand contact to substrate. Thiamine diphosphate is bound by residues Y372 and 396–398; that span reads ANT. Residue 403–404 coordinates substrate; the sequence is RN. 421–423 is a thiamine diphosphate binding site; that stretch reads GVM. D447 provides a ligand contact to Mg(2+). A thiamine diphosphate-binding site is contributed by 448 to 449; the sequence is SA. 2 residues coordinate Mg(2+): N474 and G476. Y478 contributes to the thiamine diphosphate binding site. 550-552 is a binding site for substrate; it reads SGH.

It belongs to the TPP enzyme family. As to quaternary structure, homotetramer; dimer of dimers. Mg(2+) serves as cofactor. It depends on thiamine diphosphate as a cofactor.

The catalysed reaction is oxalyl-CoA + H(+) = formyl-CoA + CO2. It functions in the pathway metabolic intermediate degradation; oxalate degradation; CO(2) and formate from oxalate: step 2/2. Involved in the catabolism of oxalate and in the adapatation to low pH via the induction of the oxalate-dependent acid tolerance response (ATR). Catalyzes the decarboxylation of oxalyl-CoA to yield carbon dioxide and formyl-CoA. This Escherichia coli O157:H7 protein is Oxalyl-CoA decarboxylase (oxc).